Reading from the N-terminus, the 153-residue chain is Nucleoside diphosphate kinase (153 aa).

K12, F60, R88, T94, R105, and N115 together coordinate ATP. H118 acts as the Pros-phosphohistidine intermediate in catalysis.

It belongs to the NDK family. The cofactor is Mg(2+).

It is found in the cytoplasm. The enzyme catalyses a 2'-deoxyribonucleoside 5'-diphosphate + ATP = a 2'-deoxyribonucleoside 5'-triphosphate + ADP. It catalyses the reaction a ribonucleoside 5'-diphosphate + ATP = a ribonucleoside 5'-triphosphate + ADP. Its function is as follows. Major role in the synthesis of nucleoside triphosphates other than ATP. The ATP gamma phosphate is transferred to the NDP beta phosphate via a ping-pong mechanism, using a phosphorylated active-site intermediate. The chain is Nucleoside diphosphate kinase from Natronomonas pharaonis (strain ATCC 35678 / DSM 2160 / CIP 103997 / JCM 8858 / NBRC 14720 / NCIMB 2260 / Gabara) (Halobacterium pharaonis).